We begin with the raw amino-acid sequence, 161 residues long: 2-C-methyl-D-erythritol 2,4-cyclodiphosphate synthase (161 aa).

The a divalent metal cation site is built by Asp11 and His13. Residues Asp11–His13 and His37–Ser38 contribute to the 4-CDP-2-C-methyl-D-erythritol 2-phosphate site. A divalent metal cation is bound at residue His45. 4-CDP-2-C-methyl-D-erythritol 2-phosphate-binding positions include Asp59–Gly61 and Thr135–Glu138.

Belongs to the IspF family. Homotrimer. The cofactor is a divalent metal cation.

It catalyses the reaction 4-CDP-2-C-methyl-D-erythritol 2-phosphate = 2-C-methyl-D-erythritol 2,4-cyclic diphosphate + CMP. The protein operates within isoprenoid biosynthesis; isopentenyl diphosphate biosynthesis via DXP pathway; isopentenyl diphosphate from 1-deoxy-D-xylulose 5-phosphate: step 4/6. Functionally, involved in the biosynthesis of isopentenyl diphosphate (IPP) and dimethylallyl diphosphate (DMAPP), two major building blocks of isoprenoid compounds. Catalyzes the conversion of 4-diphosphocytidyl-2-C-methyl-D-erythritol 2-phosphate (CDP-ME2P) to 2-C-methyl-D-erythritol 2,4-cyclodiphosphate (ME-CPP) with a corresponding release of cytidine 5-monophosphate (CMP). The sequence is that of 2-C-methyl-D-erythritol 2,4-cyclodiphosphate synthase from Acaryochloris marina (strain MBIC 11017).